Consider the following 188-residue polypeptide: Peptidyl-tRNA hydrolase (188 aa).

Tyr-14 is a tRNA binding site. His-19 (proton acceptor) is an active-site residue. 3 residues coordinate tRNA: Tyr-64, Asn-66, and Asn-112.

It belongs to the PTH family. Monomer.

The protein localises to the cytoplasm. It carries out the reaction an N-acyl-L-alpha-aminoacyl-tRNA + H2O = an N-acyl-L-amino acid + a tRNA + H(+). Its function is as follows. Hydrolyzes ribosome-free peptidyl-tRNAs (with 1 or more amino acids incorporated), which drop off the ribosome during protein synthesis, or as a result of ribosome stalling. Catalyzes the release of premature peptidyl moieties from peptidyl-tRNA molecules trapped in stalled 50S ribosomal subunits, and thus maintains levels of free tRNAs and 50S ribosomes. Releases Ala-tailed nascent peptides from stalled 50S ribosomal subunits. Non-templated Ala tailing occurs as part of the ribosome quality control (RQC) pathway. In the absence of Ala tails significantly less peptide release occurs. The Ala tail facilitates the interaction of Pth with the nascent peptide-tRNA ester bond as well as promoting nascent chain degradation; 3 Ala residues suffice to stimulate peptide release from stalled 50S ribosomal subunits. Complements a temperature-sensitive pth mutation in E.coli. The sequence is that of Peptidyl-tRNA hydrolase from Bacillus subtilis (strain 168).